The sequence spans 932 residues: Protocadherin gamma-A3 (932 aa).

The first 29 residues, 1–29, serve as a signal peptide directing secretion; it reads MTNCLSFRNGRGLALLCALLGTLCETGSG. Cadherin domains are found at residues 30–133, 134–242, 243–347, 348–452, 453–562, and 570–682; these read QIRY…APNF, PTEE…PPMF, TQPE…APEI, TITS…PPTF, PHLS…APEI, and DGST…EPSA. Over 30–692 the chain is Extracellular; that stretch reads QIRYSVSEEL…KPNDSDLTLY (663 aa). Asn-265, Asn-419, and Asn-545 each carry an N-linked (GlcNAc...) asparagine glycan. N-linked (GlcNAc...) asparagine glycosylation occurs at Asn-685. Residues 693-713 traverse the membrane as a helical segment; that stretch reads LVVAVAAVSCVFLALVIVLLA. The Cytoplasmic portion of the chain corresponds to 714–932; that stretch reads HRLRRWHKSR…KKKSGKKEKK (219 aa). 2 disordered regions span residues 806–841 and 902–932; these read LLQQ…WPNN and ATLT…KEKK. Basic residues predominate over residues 922–932; it reads NKKKSGKKEKK.

The protein localises to the cell membrane. Its function is as follows. Potential calcium-dependent cell-adhesion protein. May be involved in the establishment and maintenance of specific neuronal connections in the brain. The polypeptide is Protocadherin gamma-A3 (PCDHGA3) (Pan troglodytes (Chimpanzee)).